A 1424-amino-acid polypeptide reads, in one-letter code: S-layer protein A (1424 aa).

The signal sequence occupies residues 1–24 (MNKLVGLLVSSLFLASILIGIAPA). N-linked (GlcNAc...) asparagine glycosylation is found at N60, N70, N276, N295, N342, N358, N377, N468, N517, N545, N559, N581, N633, N714, N875, N914, N955, N989, N1018, N1042, N1093, N1134, N1197, N1217, N1252, N1276, N1304, and N1419.

Belongs to the Sulfolobales SlaA family. In terms of assembly, the mushroom-shaped unit cells of the Sulfolobales' S-layers may consist of three SlaB subunits and six SlaA subunits. In terms of processing, glycosylated. C-terminal glycosylation sites are modified with a heterogeneous family of glycans, with the largest having a composition Glc(1)Man(2)GlcNAc(2) plus 6-sulfoquinovose (QuiS).

It is found in the secreted. It localises to the cell wall. The protein resides in the S-layer. Its function is as follows. S-layer large protein. May form the highly ordered outer sheath. This is S-layer protein A from Sulfolobus acidocaldarius (strain ATCC 33909 / DSM 639 / JCM 8929 / NBRC 15157 / NCIMB 11770).